The primary structure comprises 130 residues: S-adenosylmethionine decarboxylase proenzyme (130 aa).

Ser63 functions as the Schiff-base intermediate with substrate; via pyruvic acid in the catalytic mechanism. Pyruvic acid (Ser); by autocatalysis is present on Ser63. Residue His68 is the Proton acceptor; for processing activity of the active site. The active-site Proton donor; for catalytic activity is the Cys83.

It belongs to the prokaryotic AdoMetDC family. Type 1 subfamily. As to quaternary structure, heterotetramer of two alpha and two beta chains arranged as a dimer of alpha/beta heterodimers. Pyruvate serves as cofactor. Post-translationally, is synthesized initially as an inactive proenzyme. Formation of the active enzyme involves a self-maturation process in which the active site pyruvoyl group is generated from an internal serine residue via an autocatalytic post-translational modification. Two non-identical subunits are generated from the proenzyme in this reaction, and the pyruvate is formed at the N-terminus of the alpha chain, which is derived from the carboxyl end of the proenzyme. The post-translation cleavage follows an unusual pathway, termed non-hydrolytic serinolysis, in which the side chain hydroxyl group of the serine supplies its oxygen atom to form the C-terminus of the beta chain, while the remainder of the serine residue undergoes an oxidative deamination to produce ammonia and the pyruvoyl group blocking the N-terminus of the alpha chain.

It catalyses the reaction S-adenosyl-L-methionine + H(+) = S-adenosyl 3-(methylsulfanyl)propylamine + CO2. It functions in the pathway amine and polyamine biosynthesis; S-adenosylmethioninamine biosynthesis; S-adenosylmethioninamine from S-adenosyl-L-methionine: step 1/1. In terms of biological role, catalyzes the decarboxylation of S-adenosylmethionine to S-adenosylmethioninamine (dcAdoMet), the propylamine donor required for the synthesis of the polyamines spermine and spermidine from the diamine putrescine. This chain is S-adenosylmethionine decarboxylase proenzyme, found in Thermosipho africanus (strain TCF52B).